The following is a 142-amino-acid chain: DNA-directed RNA polymerase II subunit RPB4 (142 aa).

This sequence belongs to the eukaryotic RPB4 RNA polymerase subunit family. In terms of assembly, component of the RNA polymerase II (Pol II) core complex consisting of 12 subunits: a ten-subunit catalytic core composed of POLR2A/RPB1, POLR2B/RPB2, POLR2C/RPB3, POLR2I/RPB9, POLR2J/RPB11, POLR2E/RPABC1, POLR2F/RPABC2, POLR2H/RPABC3, POLR2K/RPABC4 and POLR2L/RPABC5 and a mobile stalk composed of two subunits POLR2D/RPB4 and POLR2G/RPB7, protruding from the core and functioning primarily in transcription initiation. Part of Pol II(G) complex, in which Pol II core associates with an additional subunit POLR2M; unlike conventional Pol II, Pol II(G) functions as a transcriptional repressor. Part of TBP-based Pol II pre-initiation complex (PIC), in which Pol II core assembles with general transcription factors and other specific initiation factors including GTF2E1, GTF2E2, GTF2F1, GTF2F2, TCEA1, ERCC2, ERCC3, GTF2H2, GTF2H3, GTF2H4, GTF2H5, GTF2A1, GTF2A2, GTF2B and TBP; this large multi-subunit PIC complex mediates DNA unwinding and targets Pol II core to the transcription start site where the first phosphodiester bond forms.

It is found in the nucleus. Core component of RNA polymerase II (Pol II), a DNA-dependent RNA polymerase which synthesizes mRNA precursors and many functional non-coding RNAs using the four ribonucleoside triphosphates as substrates. Pol II is the central component of the basal RNA polymerase II transcription machinery. It is composed of mobile elements that move relative to each other. POLR2D/RPB4 is part of a subcomplex with POLR2G/RPB7 that binds to a pocket formed by POLR2A/RPB1, POLR2B/RPB2 and POLR2F/RPABC2 at the base of the clamp element. The POLR2D/RPB4-POLR2G/RPB7 subcomplex seems to lock the clamp via POLR2G/RPB7 in the closed conformation thus preventing double-stranded DNA to enter the active site cleft. The POLR2D/RPB4-POLR2G/RPB7 subcomplex binds single-stranded DNA and RNA. The chain is DNA-directed RNA polymerase II subunit RPB4 (POLR2D) from Homo sapiens (Human).